The primary structure comprises 588 residues: MNNSINHKFHHISRAEYQELLAVSRGDAVADYIIDNVSILDLINGGEISGPIVIKGRYIAGVGAEYADAPALQRIDARGATAVPGFIDAHLHIESSMMTPVTFETATLPRGLTTVICDPHEIVNVMGEAGFAWFARCAEQARQNQYLQVSSCVPALEGCDVNGASFTLEQMLAWRDHPQVTGLAEMMDYPGVISGQNALLDKLDAFRHLTLDGHCPGLGGKELNAYITAGIENCHESYQLEEGRRKLQLGMSLMIREGSAARNLNALAPLINEFNSPQCMLCTDDRNPWEIAHEGHIDALIRRLIEQHNVPLHVAYRVASWSTARHFGLNHLDLLAPGKQADIVLLSDARKVTVQQVLVKGEPIDAQTLQAEESARLAQSAPPYGNTIARQPVSASDFALQFTPGKRYRVIDVIHNELITHSHSSVYSENGFDRDDVCFIAVLERYGQRLAPACGLLGGFGLNEGALAATVSHDSHNIVVIGRSAEEMALAVYQVIQDGGGLCVVRNGQVQSHLPLPIAGLMSTDTAQSLAEQIDALKAAARECGPLPDEPFIQMAFLSLPVIPALKLTSQGLFDGEKFVFTTLEVTE.

This sequence belongs to the metallo-dependent hydrolases superfamily. Adenine deaminase family. As to quaternary structure, homodimer. The cofactor is Mn(2+).

The enzyme catalyses adenine + H2O + H(+) = hypoxanthine + NH4(+). The chain is Adenine deaminase from Shigella boydii serotype 4 (strain Sb227).